We begin with the raw amino-acid sequence, 150 residues long: D-aminoacyl-tRNA deacylase (150 aa).

The short motif at 136–137 (GP) is the Gly-cisPro motif, important for rejection of L-amino acids element.

It belongs to the DTD family. In terms of assembly, homodimer.

The protein localises to the cytoplasm. It catalyses the reaction glycyl-tRNA(Ala) + H2O = tRNA(Ala) + glycine + H(+). It carries out the reaction a D-aminoacyl-tRNA + H2O = a tRNA + a D-alpha-amino acid + H(+). An aminoacyl-tRNA editing enzyme that deacylates mischarged D-aminoacyl-tRNAs. Also deacylates mischarged glycyl-tRNA(Ala), protecting cells against glycine mischarging by AlaRS. Acts via tRNA-based rather than protein-based catalysis; rejects L-amino acids rather than detecting D-amino acids in the active site. By recycling D-aminoacyl-tRNA to D-amino acids and free tRNA molecules, this enzyme counteracts the toxicity associated with the formation of D-aminoacyl-tRNA entities in vivo and helps enforce protein L-homochirality. This is D-aminoacyl-tRNA deacylase from Staphylococcus aureus (strain bovine RF122 / ET3-1).